A 440-amino-acid polypeptide reads, in one-letter code: Transposon Ty1-PR2 Gag polyprotein (440 aa).

3 stretches are compositionally biased toward polar residues: residues 1–10, 48–60, and 127–152; these read MESQQLSNYP, TKAN…TPAS, and QSQF…GNTF. 3 disordered regions span residues 1 to 93, 126 to 173, and 352 to 440; these read MESQ…MMTQ, PQSQ…RPPP, and GSRN…PETY. Low complexity predominate over residues 153-165; it reads TDSSSADSDMTST. Residues 299–401 are RNA-binding; sequence NNGIHINNKV…NSKSKTARAH (103 aa). Residues 402–418 show a composition bias toward low complexity; that stretch reads NVSTSNNSPSTDNDSIS. Position 416 is a phosphoserine (Ser416). Residues 419 to 428 are compositionally biased toward polar residues; sequence KSTTEPIQLN. Residues 429–440 are compositionally biased toward basic and acidic residues; that stretch reads NKHDLHLRPETY.

As to quaternary structure, homotrimer.

Its subcellular location is the cytoplasm. Capsid protein (CA) is the structural component of the virus-like particle (VLP), forming the shell that encapsulates the retrotransposons dimeric RNA genome. The particles are assembled from trimer-clustered units and there are holes in the capsid shells that allow for the diffusion of macromolecules. CA also has nucleocapsid-like chaperone activity, promoting primer tRNA(i)-Met annealing to the multipartite primer-binding site (PBS), dimerization of Ty1 RNA and initiation of reverse transcription. The chain is Transposon Ty1-PR2 Gag polyprotein (TY1A-PR2) from Saccharomyces cerevisiae (strain ATCC 204508 / S288c) (Baker's yeast).